The primary structure comprises 176 residues: NAD(P)H-quinone oxidoreductase subunit 6, chloroplastic (176 aa).

The next 5 membrane-spanning stretches (helical) occupy residues 10 to 30 (FLLVFLGSGLILGGLGVVLLP), 32 to 52 (PIYSAFSLGLVLVCTSLFYIL), 61 to 81 (AQLLIYVGAINVLIIFAVMFM), 92 to 112 (LWTVGNGITSMVCISLFISLI), and 152 to 172 (FFLPFELISIILLVALIGAIA).

It belongs to the complex I subunit 6 family. In terms of assembly, NDH is composed of at least 16 different subunits, 5 of which are encoded in the nucleus.

It localises to the plastid. It is found in the chloroplast thylakoid membrane. The catalysed reaction is a plastoquinone + NADH + (n+1) H(+)(in) = a plastoquinol + NAD(+) + n H(+)(out). The enzyme catalyses a plastoquinone + NADPH + (n+1) H(+)(in) = a plastoquinol + NADP(+) + n H(+)(out). Functionally, NDH shuttles electrons from NAD(P)H:plastoquinone, via FMN and iron-sulfur (Fe-S) centers, to quinones in the photosynthetic chain and possibly in a chloroplast respiratory chain. The immediate electron acceptor for the enzyme in this species is believed to be plastoquinone. Couples the redox reaction to proton translocation, and thus conserves the redox energy in a proton gradient. The sequence is that of NAD(P)H-quinone oxidoreductase subunit 6, chloroplastic (ndhG) from Solanum bulbocastanum (Wild potato).